Here is a 238-residue protein sequence, read N- to C-terminus: Thiamine import ATP-binding protein ThiQ (238 aa).

The ABC transporter domain maps to 1–234 (MSSTALAVKG…RDIAAINRFL (234 aa)). An ATP-binding site is contributed by 36–43 (GASGSGKS).

It belongs to the ABC transporter superfamily. Thiamine importer (TC 3.A.1.19.1) family. In terms of assembly, the complex is composed of two ATP-binding proteins (ThiQ), two transmembrane proteins (ThiP) and a solute-binding protein (ThiB).

It localises to the cell inner membrane. The enzyme catalyses thiamine(out) + ATP + H2O = thiamine(in) + ADP + phosphate + H(+). In terms of biological role, part of the ABC transporter complex ThiBPQ involved in thiamine import. Responsible for energy coupling to the transport system. This chain is Thiamine import ATP-binding protein ThiQ, found in Rhizobium meliloti (strain 1021) (Ensifer meliloti).